The sequence spans 247 residues: tRNA (guanine-N(7)-)-methyltransferase (247 aa).

Residues Gly70, 93 to 94, 128 to 129, and Leu148 contribute to the S-adenosyl-L-methionine site; these read EI and NA. Residue Asp151 is part of the active site. Position 226 to 228 (226 to 228) interacts with S-adenosyl-L-methionine; it reads SEE.

It belongs to the class I-like SAM-binding methyltransferase superfamily. TrmB family.

It is found in the nucleus. The catalysed reaction is guanosine(46) in tRNA + S-adenosyl-L-methionine = N(7)-methylguanosine(46) in tRNA + S-adenosyl-L-homocysteine. The protein operates within tRNA modification; N(7)-methylguanine-tRNA biosynthesis. In terms of biological role, catalyzes the formation of N(7)-methylguanine at position 46 (m7G46) in tRNA. This Drosophila pseudoobscura pseudoobscura (Fruit fly) protein is tRNA (guanine-N(7)-)-methyltransferase.